The following is a 361-amino-acid chain: MSFNTFGHMFRVTTFGESHGVAIGCVVDGCPPLIPLTEADIQGDLDRRRPGQSRFTTQRQEADQVKILSGVMAHPVSGEQVTTGTPIALQIENTDQRSKDYSEIKDKYRPGHADFTYEAKYGIRDYRGGGRSSARETASRVAAGAVARKVVPGMTIRAALVQMGPHAIDRAKWDWAEISNNPFFCPDKDKAAFFEEYLDGIRKTGSSIGAVIEVIAEGVPAGLGAPIYGKLDSDLAAALMSINAVKGVEIGDGFATAALSGEENADEIRSSNHGPVFLSNHAGGILGGISTGQPVVARFAVKPTSSILSPRKTIDREGHDTDILTKGRHDPCVGIRAVPVAEAMVACVLADHLIRHRGQVG.

Residues Arg-48 and Arg-54 each coordinate NADP(+). FMN contacts are provided by residues 131–133, 243–244, Gly-287, 302–306, and Arg-328; these read RSS, NA, and KPTSS.

It belongs to the chorismate synthase family. Homotetramer. It depends on FMNH2 as a cofactor.

It carries out the reaction 5-O-(1-carboxyvinyl)-3-phosphoshikimate = chorismate + phosphate. The protein operates within metabolic intermediate biosynthesis; chorismate biosynthesis; chorismate from D-erythrose 4-phosphate and phosphoenolpyruvate: step 7/7. Its function is as follows. Catalyzes the anti-1,4-elimination of the C-3 phosphate and the C-6 proR hydrogen from 5-enolpyruvylshikimate-3-phosphate (EPSP) to yield chorismate, which is the branch point compound that serves as the starting substrate for the three terminal pathways of aromatic amino acid biosynthesis. This reaction introduces a second double bond into the aromatic ring system. The chain is Chorismate synthase from Rhodopseudomonas palustris (strain BisA53).